Here is a 23-residue protein sequence, read N- to C-terminus: Conotoxin Cl6c (23 aa).

3 disulfide bridges follow: Cys2–Cys12, Cys5–Cys17, and Cys11–Cys21.

In terms of tissue distribution, expressed by the venom duct.

The protein resides in the secreted. The polypeptide is Conotoxin Cl6c (Californiconus californicus (California cone)).